Consider the following 457-residue polypeptide: Polygalacturonase-2 (457 aa).

The first 24 residues, 1 to 24 (MVIQRNSILLLIIIFASSISTCRS), serve as a signal peptide directing secretion. Residues 25-71 (NVIDDNLFKQVYDNILEQEFAHDFQAYLSYLSKNIESNNNIDKVDKN) constitute a propeptide that is removed on maturation. Residues Asn-189 and Asn-240 are each glycosylated (N-linked (GlcNAc...) asparagine). PbH1 repeat units follow at residues 228–255 (SCTNVVASNLMINASAKSPNTDGVHVSN) and 256–277 (TQYIQISDTIIGTGDDCISIVS). Asp-270 acts as the Proton donor in catalysis. An N-linked (GlcNAc...) asparagine glycan is attached at Asn-286. His-293 is a catalytic residue. PbH1 repeat units follow at residues 309-330 (VSNVTVNEAKIIGAENGVRIKT) and 338-359 (ASNIKFLNVEMQDVKYPIIIDQ). An N-linked (GlcNAc...) asparagine glycan is attached at Asn-311. A propeptide spanning residues 445–457 (LEISEDEALLYNY) is cleaved from the precursor.

Belongs to the glycosyl hydrolase 28 family. In terms of assembly, monomer PG2 (isoenzymes PG2A and PG2B). Also forms heterodimers called polygalacturonase 1 (PG1) with the beta subunit GP1. In terms of processing, N-glycosylated. PG2B isozyme has a greater degree of glycosylation than PG2A. In terms of tissue distribution, expressed only in ripening fruits (at protein level).

The protein resides in the secreted. Its subcellular location is the extracellular space. It localises to the apoplast. The protein localises to the cell wall. The catalysed reaction is (1,4-alpha-D-galacturonosyl)n+m + H2O = (1,4-alpha-D-galacturonosyl)n + (1,4-alpha-D-galacturonosyl)m.. In terms of biological role, catalytic subunit of the polygalacturonase isozyme 1 and 2 (PG1 and PG2). Acts in concert with the pectinesterase, in the ripening process. Is involved in cell wall metabolism, specifically in polyuronide degradation. The depolymerization and solubilization of cell wall polyuronides mediated by PG2 during ripening seems to be limited by the beta subunit GP1, probably by recruiting PG2 to form PG1. The protein is Polygalacturonase-2 (PG2) of Solanum lycopersicum (Tomato).